Here is an 895-residue protein sequence, read N- to C-terminus: Tiger protein D1 (895 aa).

The first 21 residues, Met-1–Ser-21, serve as a signal peptide directing secretion. The Extracellular portion of the chain corresponds to Ala-22–Gly-861. Residues Asn-29, Asn-52, Asn-171, Asn-181, Asn-253, Asn-257, Asn-277, Asn-288, Asn-351, Asn-368, Asn-407, Asn-428, Asn-451, Asn-481, Asn-507, Asn-521, Asn-573, Asn-583, Asn-593, Asn-623, Asn-652, Asn-685, Asn-720, Asn-757, Asn-766, Asn-780, and Asn-799 are each glycosylated (N-linked (GlcNAc...) asparagine). Residues Ala-295–Tyr-381 form the IPT/TIG 1 domain. 2 IPT/TIG domains span residues Pro-560–Leu-638 and Pro-642–Tyr-725. The helical transmembrane segment at Ala-862–Phe-882 threads the bilayer. The Cytoplasmic portion of the chain corresponds to Tyr-883 to Asn-895.

The protein localises to the cell membrane. Its function is as follows. May be involved in the regulation of aggregation. Activates tgrC1. This chain is Tiger protein D1 (tgrD1), found in Dictyostelium discoideum (Social amoeba).